A 291-amino-acid polypeptide reads, in one-letter code: Protease HtpX (291 aa).

The next 2 helical transmembrane spans lie at 4 to 24 and 36 to 56; these read IALF…VLNI and LSGL…VSLL. His-143 lines the Zn(2+) pocket. Residue Glu-144 is part of the active site. His-147 serves as a coordination point for Zn(2+). Helical transmembrane passes span 151–171 and 199–219; these read GDMI…IFLS and FIVS…LTMW. Position 225 (Glu-225) interacts with Zn(2+).

Belongs to the peptidase M48B family. Zn(2+) is required as a cofactor.

The protein localises to the cell inner membrane. The polypeptide is Protease HtpX (Aliivibrio salmonicida (strain LFI1238) (Vibrio salmonicida (strain LFI1238))).